The primary structure comprises 131 residues: Profilin-9 (131 aa).

A disulfide bond links cysteine 13 and cysteine 115. Positions 81–97 (AVTRGKKGAGGITIKKT) match the Involved in PIP2 interaction motif. The residue at position 111 (threonine 111) is a Phosphothreonine.

This sequence belongs to the profilin family. As to quaternary structure, occurs in many kinds of cells as a complex with monomeric actin in a 1:1 ratio. Post-translationally, phosphorylated by MAP kinases.

Its subcellular location is the cytoplasm. The protein localises to the cytoskeleton. Binds to actin and affects the structure of the cytoskeleton. At high concentrations, profilin prevents the polymerization of actin, whereas it enhances it at low concentrations. The sequence is that of Profilin-9 from Phleum pratense (Common timothy).